We begin with the raw amino-acid sequence, 113 residues long: Hydrogenase maturation factor HypA (113 aa).

Histidine 2 provides a ligand contact to Ni(2+). Cysteine 73, cysteine 76, cysteine 89, and cysteine 92 together coordinate Zn(2+).

Belongs to the HypA/HybF family.

Involved in the maturation of [NiFe] hydrogenases. Required for nickel insertion into the metal center of the hydrogenase. This chain is Hydrogenase maturation factor HypA, found in Cereibacter sphaeroides (Rhodobacter sphaeroides).